Consider the following 29-residue polypeptide: Trypsin inhibitor 5 (29 aa).

Intrachain disulfides connect Cys-3–Cys-20, Cys-10–Cys-22, and Cys-16–Cys-28.

The protein belongs to the protease inhibitor I7 (squash-type serine protease inhibitor) family.

The protein resides in the secreted. Its function is as follows. Strongly inhibits trypsin, weakly inhibits chymotrypsin. This is Trypsin inhibitor 5 from Cyclanthera pedata (Achocha).